Here is a 138-residue protein sequence, read N- to C-terminus: PTS system sorbose-specific EIIA component (138 aa).

A PTS EIIA type-4 domain is found at 1–125 (MEIILVGHAH…KIKEEFSTSL (125 aa)). Catalysis depends on H8, which acts as the Tele-phosphohistidine intermediate. At H8 the chain carries Phosphohistidine; by HPr.

The protein localises to the cytoplasm. In terms of biological role, the phosphoenolpyruvate-dependent sugar phosphotransferase system (PTS), a major carbohydrate active transport system, catalyzes the phosphorylation of incoming sugar substrates concomitant with their translocation across the cell membrane. The enzyme II SorABCD PTS system is involved in L-sorbose transport. The polypeptide is PTS system sorbose-specific EIIA component (Lacticaseibacillus casei (Lactobacillus casei)).